A 590-amino-acid chain; its full sequence is Putative DEAD-box ATP-dependent RNA helicase 51 (590 aa).

Positions 1–81 are disordered; it reads MHPIKLCARS…KQGEGKKGSG (81 aa). Over residues 40–51 the composition is skewed to polar residues; the sequence is AACNSEGENNAT. Positions 59–78 are enriched in basic and acidic residues; it reads NKKMKEEKSKRKKKQGEGKK. Positions 86 to 114 match the Q motif motif; that stretch reads KLFSDLPISDLTANAIRDMNYTHLTEIQA. One can recognise a Helicase ATP-binding domain in the interval 117–293; it reads IPPLMLGSDV…KLTFGSKEER (177 aa). ATP is bound at residue 130 to 137; sequence AKTGSGKT. The short motif at 240 to 243 is the DEAD box element; the sequence is DEAD. The Helicase C-terminal domain occupies 329–481; it reads VLYAFLKKAL…ELVPKLQPYL (153 aa). Residues 549-590 are disordered; that stretch reads LESSASKHRKKRNVNTGRRHGIGPSNPYGRKGSDDRRQFARF. Basic residues predominate over residues 554 to 569; that stretch reads SKHRKKRNVNTGRRHG. A compositionally biased stretch (basic and acidic residues) spans 579 to 590; that stretch reads KGSDDRRQFARF.

This sequence belongs to the DEAD box helicase family. DDX18/HAS1 subfamily.

The catalysed reaction is ATP + H2O = ADP + phosphate + H(+). This chain is Putative DEAD-box ATP-dependent RNA helicase 51, found in Oryza sativa subsp. japonica (Rice).